Consider the following 204-residue polypeptide: Ribonuclease HII (204 aa).

Residues glutamate 16–lysine 204 enclose the RNase H type-2 domain. Aspartate 22, glutamate 23, and aspartate 120 together coordinate a divalent metal cation.

It belongs to the RNase HII family. The cofactor is Mn(2+). Mg(2+) is required as a cofactor.

Its subcellular location is the cytoplasm. It carries out the reaction Endonucleolytic cleavage to 5'-phosphomonoester.. In terms of biological role, endonuclease that specifically degrades the RNA of RNA-DNA hybrids. In Alkaliphilus metalliredigens (strain QYMF), this protein is Ribonuclease HII.